Here is a 332-residue protein sequence, read N- to C-terminus: MSKLPLLPTTVIGSYPRPKWLRESIRLHKAGKMSNEDLQEAFNDAVIAVFQDHYKAGVDVPTDGEVRRDEMVEFFAERIKGFKFYGPVRVWGTAYYRKPSVVSKIEYREPMLVDEFTFAKSVSYTDNLKITITGPYTIAEWSYNEYYRNKKDLVFDLAKAINQEIKNLVEAGAKIIQIDEPALHTRKEDVSWGVEAVNEAVKGVNAKLVMHICYGDYSFVAPYFNEIKVDQINFALKIYNYKPLELLKKYGFDKELGAGVVDVHNRKVETSEEVANDIRKILEYFPPEKVWINPDCGLKLLSRKIAYQKLVSMVEGTKVVREELKRKGYSVD.

The Zn(2+) site is built by His211, Cys213, and Cys296.

Belongs to the archaeal MetE family. It depends on Zn(2+) as a cofactor.

The protein operates within amino-acid biosynthesis; L-methionine biosynthesis via de novo pathway. In terms of biological role, catalyzes the transfer of a methyl group to L-homocysteine resulting in methionine formation. The physiological methyl donor is unknown. This is Methionine synthase from Saccharolobus solfataricus (strain ATCC 35092 / DSM 1617 / JCM 11322 / P2) (Sulfolobus solfataricus).